We begin with the raw amino-acid sequence, 75 residues long: Putative primary metabolism protein HVA1 (75 aa).

A compositionally biased stretch (polar residues) spans 1–13 (MSVQDKQGQNINV). Disordered regions lie at residues 1 to 24 (MSVQDKQGQNINVGDTVYTPYRGG) and 40 to 75 (AAEKGVKNPPKVLFTDQNNKDVAHNPGTLTDLDKQK).

Functionally, may play a role in primary metabolism. This Cryptococcus neoformans var. grubii serotype A (strain H99 / ATCC 208821 / CBS 10515 / FGSC 9487) (Filobasidiella neoformans var. grubii) protein is Putative primary metabolism protein HVA1.